A 128-amino-acid chain; its full sequence is Type-4 ice-structuring protein LS-12 (128 aa).

The N-terminal stretch at 1-20 (MKFSLVATIVLLALAQGSFA) is a signal peptide. Q21 is subject to Pyrrolidone carboxylic acid.

Belongs to the apolipoprotein A1/A4/E family.

Its subcellular location is the secreted. Functionally, antifreeze proteins lower the blood freezing point. The sequence is that of Type-4 ice-structuring protein LS-12 from Myoxocephalus octodecemspinosus (Longhorn sculpin).